Consider the following 157-residue polypeptide: SsrA-binding protein (157 aa).

The disordered stretch occupies residues 130–157 (HDKRQDMAKKDSQRRIQKELGQRQKGME). The segment covering 132–157 (KRQDMAKKDSQRRIQKELGQRQKGME) has biased composition (basic and acidic residues).

It belongs to the SmpB family.

It is found in the cytoplasm. Required for rescue of stalled ribosomes mediated by trans-translation. Binds to transfer-messenger RNA (tmRNA), required for stable association of tmRNA with ribosomes. tmRNA and SmpB together mimic tRNA shape, replacing the anticodon stem-loop with SmpB. tmRNA is encoded by the ssrA gene; the 2 termini fold to resemble tRNA(Ala) and it encodes a 'tag peptide', a short internal open reading frame. During trans-translation Ala-aminoacylated tmRNA acts like a tRNA, entering the A-site of stalled ribosomes, displacing the stalled mRNA. The ribosome then switches to translate the ORF on the tmRNA; the nascent peptide is terminated with the 'tag peptide' encoded by the tmRNA and targeted for degradation. The ribosome is freed to recommence translation, which seems to be the essential function of trans-translation. The sequence is that of SsrA-binding protein from Alkaliphilus metalliredigens (strain QYMF).